A 73-amino-acid polypeptide reads, in one-letter code: UPF0235 protein LA_1736 (73 aa).

The protein belongs to the UPF0235 family.

In Leptospira interrogans serogroup Icterohaemorrhagiae serovar Lai (strain 56601), this protein is UPF0235 protein LA_1736.